Here is a 671-residue protein sequence, read N- to C-terminus: UvrABC system protein C (671 aa).

The interval 1–20 (MPHLPDSMSPEAPAGPAPAT) is disordered. The segment covering 10–20 (PEAPAGPAPAT) has biased composition (low complexity). Positions 37 to 115 (PLPGVYRYFD…IKTLNPKYNI (79 aa)) constitute a GIY-YIG domain. Positions 232–267 (RQVMEALEARMMAHAEKLEFEQAAELRNQVAALSNV) constitute a UVR domain.

The protein belongs to the UvrC family. In terms of assembly, interacts with UvrB in an incision complex.

The protein localises to the cytoplasm. The UvrABC repair system catalyzes the recognition and processing of DNA lesions. UvrC both incises the 5' and 3' sides of the lesion. The N-terminal half is responsible for the 3' incision and the C-terminal half is responsible for the 5' incision. The protein is UvrABC system protein C of Albidiferax ferrireducens (strain ATCC BAA-621 / DSM 15236 / T118) (Rhodoferax ferrireducens).